We begin with the raw amino-acid sequence, 172 residues long: Small ribosomal subunit protein uS5 (172 aa).

The region spanning 17–80 (LREKMIAINR…EEARRNLAKI (64 aa)) is the S5 DRBM domain.

Belongs to the universal ribosomal protein uS5 family. In terms of assembly, part of the 30S ribosomal subunit. Contacts proteins S4 and S8.

With S4 and S12 plays an important role in translational accuracy. In terms of biological role, located at the back of the 30S subunit body where it stabilizes the conformation of the head with respect to the body. In Variovorax paradoxus (strain S110), this protein is Small ribosomal subunit protein uS5.